The sequence spans 160 residues: Protein-export protein SecB (160 aa).

The protein belongs to the SecB family. As to quaternary structure, homotetramer, a dimer of dimers. One homotetramer interacts with 1 SecA dimer.

The protein resides in the cytoplasm. One of the proteins required for the normal export of preproteins out of the cell cytoplasm. It is a molecular chaperone that binds to a subset of precursor proteins, maintaining them in a translocation-competent state. It also specifically binds to its receptor SecA. The chain is Protein-export protein SecB from Rhodospirillum rubrum (strain ATCC 11170 / ATH 1.1.1 / DSM 467 / LMG 4362 / NCIMB 8255 / S1).